Consider the following 46-residue polypeptide: Light-harvesting protein B-800/850 beta 1 chain (46 aa).

At 2–19 (AERSLSGLTEEEAIAVHD) the chain is on the cytoplasmic side. Positions 18 and 36 each coordinate a bacteriochlorophyll. Residues 20–42 (QFKTTFSAFIILAAVAHVLVWVW) traverse the membrane as a helical segment. The Periplasmic portion of the chain corresponds to 43-46 (KPWF).

This sequence belongs to the antenna complex beta subunit family. In terms of assembly, the core complex is formed by different alpha and beta chains, binding bacteriochlorophyll molecules, and arranged most probably in tetrameric structures disposed around the reaction center.

The protein resides in the cell inner membrane. Antenna complexes are light-harvesting systems, which transfer the excitation energy to the reaction centers. The polypeptide is Light-harvesting protein B-800/850 beta 1 chain (B1) (Magnetospirillum molischianum (Rhodospirillum molischianum)).